A 154-amino-acid polypeptide reads, in one-letter code: ATP synthase subunit b (154 aa).

Residues 9-29 (AIAFVIFVWFCMKYVWPPLMA) form a helical membrane-spanning segment.

The protein belongs to the ATPase B chain family. In terms of assembly, F-type ATPases have 2 components, F(1) - the catalytic core - and F(0) - the membrane proton channel. F(1) has five subunits: alpha(3), beta(3), gamma(1), delta(1), epsilon(1). F(0) has three main subunits: a(1), b(2) and c(10-14). The alpha and beta chains form an alternating ring which encloses part of the gamma chain. F(1) is attached to F(0) by a central stalk formed by the gamma and epsilon chains, while a peripheral stalk is formed by the delta and b chains.

The protein localises to the cell inner membrane. Functionally, f(1)F(0) ATP synthase produces ATP from ADP in the presence of a proton or sodium gradient. F-type ATPases consist of two structural domains, F(1) containing the extramembraneous catalytic core and F(0) containing the membrane proton channel, linked together by a central stalk and a peripheral stalk. During catalysis, ATP synthesis in the catalytic domain of F(1) is coupled via a rotary mechanism of the central stalk subunits to proton translocation. In terms of biological role, component of the F(0) channel, it forms part of the peripheral stalk, linking F(1) to F(0). This is ATP synthase subunit b from Klebsiella pneumoniae subsp. pneumoniae (strain ATCC 700721 / MGH 78578).